We begin with the raw amino-acid sequence, 216 residues long: Probable phosphatase SPAC513.02 (216 aa).

The active-site Tele-phosphohistidine intermediate is His15.

The protein belongs to the phosphoglycerate mutase family. BPG-dependent PGAM subfamily.

The protein localises to the cytoplasm. The protein resides in the nucleus. This is Probable phosphatase SPAC513.02 from Schizosaccharomyces pombe (strain 972 / ATCC 24843) (Fission yeast).